A 61-amino-acid chain; its full sequence is Putative antitoxin RelB2 (61 aa).

In terms of biological role, antitoxin component of a type II toxin-antitoxin (TA) system. Its cognate toxin is RelE2 (Potential). The protein is Putative antitoxin RelB2 (relB2) of Methanocaldococcus jannaschii (strain ATCC 43067 / DSM 2661 / JAL-1 / JCM 10045 / NBRC 100440) (Methanococcus jannaschii).